The following is a 396-amino-acid chain: UDP-galactose translocator (396 aa).

A run of 10 helical transmembrane segments spans residues 3–23 (AVGA…AGAL), 37–57 (YISL…IRYA), 65–85 (FFAT…CLLL), 97–117 (LVLF…KLAV), 140–160 (TFQV…VLML), 169–189 (WASL…QAGG), 200–220 (GAGL…GVYF), 238–258 (LGLF…GTAV), 269–289 (PAVW…AVVV), and 315–335 (LFGF…IGAV). The segment at 358–379 (PCVHQQPPGQPPPPQLSSHRGD) is disordered. The ER retention motif motif lies at 392 to 396 (KVKGS).

This sequence belongs to the nucleotide-sugar transporter family. SLC35A subfamily. As to quaternary structure, interacts with SLC35A3; the interaction is reduced in the presence of SLC35A4. Found in a complex with SLC35A3 and SLC35A4. Interacts with B4GALT4.

The protein localises to the endoplasmic reticulum membrane. It localises to the golgi apparatus membrane. It catalyses the reaction UMP(out) + UDP-alpha-D-galactose(in) = UMP(in) + UDP-alpha-D-galactose(out). It carries out the reaction UDP-N-acetyl-alpha-D-galactosamine(in) + UMP(out) = UDP-N-acetyl-alpha-D-galactosamine(out) + UMP(in). The catalysed reaction is UMP(out) + UDP-alpha-D-glucose(in) = UMP(in) + UDP-alpha-D-glucose(out). The enzyme catalyses UMP(out) + UDP-N-acetyl-alpha-D-glucosamine(in) = UMP(in) + UDP-N-acetyl-alpha-D-glucosamine(out). It catalyses the reaction UDP-alpha-D-galactose(in) + AMP(out) = UDP-alpha-D-galactose(out) + AMP(in). It carries out the reaction UDP-alpha-D-galactose(in) + CMP(out) = UDP-alpha-D-galactose(out) + CMP(in). The catalysed reaction is UDP-N-acetyl-alpha-D-galactosamine(out) + UDP-alpha-D-galactose(in) = UDP-N-acetyl-alpha-D-galactosamine(in) + UDP-alpha-D-galactose(out). The enzyme catalyses UDP-N-acetyl-alpha-D-glucosamine(out) + UDP-alpha-D-galactose(in) = UDP-N-acetyl-alpha-D-glucosamine(in) + UDP-alpha-D-galactose(out). It catalyses the reaction UDP-alpha-D-galactose(in) + UDP-alpha-D-glucose(out) = UDP-alpha-D-galactose(out) + UDP-alpha-D-glucose(in). It carries out the reaction UMP(out) + CMP(in) = UMP(in) + CMP(out). The catalysed reaction is UMP(out) + AMP(in) = UMP(in) + AMP(out). In terms of biological role, transports uridine diphosphate galactose (UDP-galactose) from the cytosol into the Golgi apparatus, functioning as an antiporter that exchanges UDP-galactose for UMP. It is also able to exchange UDP-galactose for AMP and CMP, and to transport UDP-N-acetylgalactosamine (UDP-GalNAc) and other nucleotide sugars. As a provider of UDP-galactose to galactosyltransferases present in the Golgi apparatus, it is necessary for globotriaosylceramide/globoside (Gb3Cer) synthesis from lactosylceramide. This is UDP-galactose translocator from Homo sapiens (Human).